The following is a 311-amino-acid chain: tRNA dimethylallyltransferase (311 aa).

9-16 (GPTAVGKT) is an ATP binding site. Residue 11–16 (TAVGKT) participates in substrate binding. The tract at residues 34 to 37 (DSMQ) is interaction with substrate tRNA.

The protein belongs to the IPP transferase family. Monomer. The cofactor is Mg(2+).

It carries out the reaction adenosine(37) in tRNA + dimethylallyl diphosphate = N(6)-dimethylallyladenosine(37) in tRNA + diphosphate. Functionally, catalyzes the transfer of a dimethylallyl group onto the adenine at position 37 in tRNAs that read codons beginning with uridine, leading to the formation of N6-(dimethylallyl)adenosine (i(6)A). The sequence is that of tRNA dimethylallyltransferase from Clostridium botulinum (strain Okra / Type B1).